The sequence spans 308 residues: Ribonuclease Z (308 aa).

Positions 61, 63, 65, 66, 139, 210, and 268 each coordinate Zn(2+). Residue D65 is the Proton acceptor of the active site.

Belongs to the RNase Z family. As to quaternary structure, homodimer. It depends on Zn(2+) as a cofactor.

The catalysed reaction is Endonucleolytic cleavage of RNA, removing extra 3' nucleotides from tRNA precursor, generating 3' termini of tRNAs. A 3'-hydroxy group is left at the tRNA terminus and a 5'-phosphoryl group is left at the trailer molecule.. Functionally, zinc phosphodiesterase, which displays some tRNA 3'-processing endonuclease activity. Probably involved in tRNA maturation, by removing a 3'-trailer from precursor tRNA. This Natronomonas pharaonis (strain ATCC 35678 / DSM 2160 / CIP 103997 / JCM 8858 / NBRC 14720 / NCIMB 2260 / Gabara) (Halobacterium pharaonis) protein is Ribonuclease Z.